The sequence spans 898 residues: DNA damage-induced apoptosis suppressor protein (898 aa).

Disordered stretches follow at residues 191–210, 643–670, and 710–749; these read CGSQ…DSDL, SINT…HEGS, and YPIN…FEES. Composition is skewed to polar residues over residues 643 to 664 and 710 to 725; these read SINT…PSSS and YPIN…KPSL. Residues 726–741 are compositionally biased toward low complexity; sequence QSISPSRYSRPRSQSD.

In terms of tissue distribution, highly expressed in the testis, spleen and heart. Expressed at high levels in the primary spermatocytes and to a lesser extent in the round spermatids. Also found in the bone marrow, brain, lung, kidney and liver.

It localises to the cytoplasm. The protein localises to the nucleus. May be an anti-apoptotic protein involved in DNA repair or cell survival. The sequence is that of DNA damage-induced apoptosis suppressor protein (Ddias) from Mus musculus (Mouse).